The primary structure comprises 292 residues: Homoserine kinase (292 aa).

ATP is bound at residue 81-91 (RPKSGLGSSGA).

This sequence belongs to the GHMP kinase family. Homoserine kinase subfamily.

The protein resides in the cytoplasm. The enzyme catalyses L-homoserine + ATP = O-phospho-L-homoserine + ADP + H(+). Its pathway is amino-acid biosynthesis; L-threonine biosynthesis; L-threonine from L-aspartate: step 4/5. Its function is as follows. Catalyzes the ATP-dependent phosphorylation of L-homoserine to L-homoserine phosphate. The chain is Homoserine kinase from Pyrococcus furiosus (strain ATCC 43587 / DSM 3638 / JCM 8422 / Vc1).